A 526-amino-acid polypeptide reads, in one-letter code: MTSRRSHGDVTPFLTQADNTEEEGVRDPESQSSDEEEEEGKDHGKETHLLTGISYKRSVIIVIILFYINLLNYMDRFTVAGVLPDIKKAFNISDSNSGLVQTVFICSYMFLAPVFGYLGDRYNRKLIMCVGISFWSLVTLLSSFVSNQYFWLFLITRGLVGVGEASYSTIAPTIIADLFLADQRTRMLSFFYFATPVGCGLGYIVGSEMTSAAGDWHWALRVTPGLGLLAVLLLIFVAEEPPRGALERKTDRPLTNTSWSSDMKALLKNPSFILSTFGFTTVAFVTGALALWGPTYLMRSRMVIYKSKPCEGGICNYDDSMIFGGITCITGILGVLTGVEISKRYRKTNPRADPLVCAVGMISSAPFLFLSLAFADTSLVATYVFIFIGETLLSLNWALVADILLYVVIPTRRSTAEALQIVVSHLLGDAGSPYLIGVISDQIQKGKPASFLIQMRSLEYALMICAFVGVIGGGFFLTTALFIEKDRKKAELFSQGLLPADETDAERIVVPKRGRSTKVPVSSVLI.

Residues 1–44 form a disordered region; the sequence is MTSRRSHGDVTPFLTQADNTEEEGVRDPESQSSDEEEEEGKDHG. The next 12 helical transmembrane spans lie at 59-79, 98-118, 126-146, 159-179, 187-207, 218-238, 272-292, 321-341, 355-375, 384-404, 419-439, and 463-483; these read VIIV…RFTV, GLVQ…FGYL, LIMC…SFVS, LVGV…ADLF, MLSF…IVGS, WALR…IFVA, FILS…LALW, MIFG…GVEI, LVCA…LAFA, VFIF…ADIL, LQIV…IGVI, and MICA…ALFI.

It belongs to the major facilitator superfamily. Spinster (TC 2.A.1.49) family.

It is found in the lysosome membrane. The catalysed reaction is a 1-acyl-sn-glycero-3-phosphocholine(out) + H(+)(out) = a 1-acyl-sn-glycero-3-phosphocholine(in) + H(+)(in). It catalyses the reaction a 1-acyl-sn-glycero-3-phosphoethanolamine(out) + H(+)(out) = a 1-acyl-sn-glycero-3-phosphoethanolamine(in) + H(+)(in). The enzyme catalyses a 1-O-(1Z-alkenyl)-sn-glycero-3-phosphocholine(out) + H(+)(out) = a 1-O-(1Z-alkenyl)-sn-glycero-3-phosphocholine(in) + H(+)(in). It carries out the reaction a 1-O-(1Z-alkenyl)-sn-glycero-3-phosphoethanolamine(out) + H(+)(out) = a 1-O-(1Z-alkenyl)-sn-glycero-3-phosphoethanolamine(in) + H(+)(in). Functionally, mediates the rate-limiting, proton-dependent, lysosomal efflux of lysophospholipids. Selective for zwitterionic headgroups such as lysophosphatidylcholine (LPC) and lysophosphatidylethanolamine (LPE). Essential player in lysosomal homeostasis. This Xenopus laevis (African clawed frog) protein is Protein spinster homolog 1 (spns1).